We begin with the raw amino-acid sequence, 681 residues long: DNA-directed RNA polymerase subunit beta' (681 aa).

Residues Cys-69, Cys-71, Cys-87, and Cys-90 each contribute to the Zn(2+) site. Positions 489, 491, and 493 each coordinate Mg(2+).

This sequence belongs to the RNA polymerase beta' chain family. RpoC1 subfamily. In plastids the minimal PEP RNA polymerase catalytic core is composed of four subunits: alpha, beta, beta', and beta''. When a (nuclear-encoded) sigma factor is associated with the core the holoenzyme is formed, which can initiate transcription. It depends on Mg(2+) as a cofactor. Zn(2+) serves as cofactor.

It is found in the plastid. The protein resides in the chloroplast. It catalyses the reaction RNA(n) + a ribonucleoside 5'-triphosphate = RNA(n+1) + diphosphate. In terms of biological role, DNA-dependent RNA polymerase catalyzes the transcription of DNA into RNA using the four ribonucleoside triphosphates as substrates. In Anthoceros angustus (Hornwort), this protein is DNA-directed RNA polymerase subunit beta'.